Consider the following 358-residue polypeptide: Arginine kinase (358 aa).

A Phosphagen kinase N-terminal domain is found at 2-84; that stretch reads SDADLFSKLD…LDEVIKDYHK (83 aa). Position 57-61 (57-61) interacts with substrate; the sequence is GVGIY. Positions 112-350 constitute a Phosphagen kinase C-terminal domain; it reads FIVSTRVRVG…EEILKREKEL (239 aa). Residues 115–119 and His-178 contribute to the ATP site; that span reads STRVR. Glu-218 is a binding site for substrate. Arg-222 lines the ATP pocket. Cys-265 serves as a coordination point for substrate. ATP is bound by residues 274-278 and 303-308; these read RASVH and RGIHGE. Glu-308 contacts substrate.

This sequence belongs to the ATP:guanido phosphotransferase family.

The enzyme catalyses L-arginine + ATP = N(omega)-phospho-L-arginine + ADP + H(+). The chain is Arginine kinase from Turbo cornutus (Horned turban).